The primary structure comprises 196 residues: UPF0215 protein MA_4269 (196 aa).

Belongs to the UPF0215 family.

This chain is UPF0215 protein MA_4269, found in Methanosarcina acetivorans (strain ATCC 35395 / DSM 2834 / JCM 12185 / C2A).